The primary structure comprises 188 residues: MIQPVKEKIILGIDPGTTIMGYGVLRVCGTRPEMIAMGIIDLRKFGNHYLKLRHIHERVLSIIESYLPDELAIEAPFFGKNVQSMLKLGRAQGVAMAAALSRDIPITEYAPLKIKMAITGNGQASKEQVADMLQRMLHFAKEDMPVFMDATDGLAAAYCHFLQMGRPVMEKGYSGWKDFIAKNPERVK.

Residues aspartate 14, glutamate 74, and aspartate 149 contribute to the active site. Mg(2+)-binding residues include aspartate 14, glutamate 74, and aspartate 149.

The protein belongs to the RuvC family. As to quaternary structure, homodimer which binds Holliday junction (HJ) DNA. The HJ becomes 2-fold symmetrical on binding to RuvC with unstacked arms; it has a different conformation from HJ DNA in complex with RuvA. In the full resolvosome a probable DNA-RuvA(4)-RuvB(12)-RuvC(2) complex forms which resolves the HJ. Requires Mg(2+) as cofactor.

Its subcellular location is the cytoplasm. It catalyses the reaction Endonucleolytic cleavage at a junction such as a reciprocal single-stranded crossover between two homologous DNA duplexes (Holliday junction).. The RuvA-RuvB-RuvC complex processes Holliday junction (HJ) DNA during genetic recombination and DNA repair. Endonuclease that resolves HJ intermediates. Cleaves cruciform DNA by making single-stranded nicks across the HJ at symmetrical positions within the homologous arms, yielding a 5'-phosphate and a 3'-hydroxyl group; requires a central core of homology in the junction. The consensus cleavage sequence is 5'-(A/T)TT(C/G)-3'. Cleavage occurs on the 3'-side of the TT dinucleotide at the point of strand exchange. HJ branch migration catalyzed by RuvA-RuvB allows RuvC to scan DNA until it finds its consensus sequence, where it cleaves and resolves the cruciform DNA. The chain is Crossover junction endodeoxyribonuclease RuvC from Bacteroides fragilis (strain ATCC 25285 / DSM 2151 / CCUG 4856 / JCM 11019 / LMG 10263 / NCTC 9343 / Onslow / VPI 2553 / EN-2).